We begin with the raw amino-acid sequence, 215 residues long: MVFRRFVEVGRVAYVSFGPHAGKLVAIVDVIDQNRALVDGPCTQVRRQAMPFKCMQLTDFILKFPHSAHQKYVRQAWQKADINTKWAATRWAKKIEARERKAKMTDFDRFKVMKAKKMRNRIIKNEVKKLQKAALLKASPKKAPGTKGTAAAAAAAAAAKVPAKKITAASKKAPAQKVPAQKATGQKAAPAPKAQKGQKAPAQKAPAPKASGKKA.

Lysine 79 is subject to N6-acetyllysine. Residue lysine 85 is modified to N6-acetyllysine; alternate. Position 85 is an N6-succinyllysine; alternate (lysine 85). A Glycyl lysine isopeptide (Lys-Gly) (interchain with G-Cter in SUMO2) cross-link involves residue lysine 124. Phosphoserine is present on serine 139. The tract at residues 161 to 215 (VPAKKITAASKKAPAQKVPAQKATGQKAAPAPKAQKGQKAPAQKAPAPKASGKKA) is disordered. 6 repeat units span residues 171-175 (KKAPA), 176-180 (QKVPA), 181-185 (QKATG), 186-190 (QKAAP), 193-195 (KAQ), and 196-198 (KGQ). Residues 171–190 (KKAPAQKVPAQKATGQKAAP) are 4 X 5 AA tandem repeats of Q-K-A-[PAS]-X. A 2 X 3 AA tandem repeats of K-[GA]-Q region spans residues 193-198 (KAQKGQ). At lysine 204 the chain carries N6-succinyllysine.

This sequence belongs to the eukaryotic ribosomal protein eL14 family. As to quaternary structure, component of the large ribosomal subunit.

The protein localises to the cytoplasm. Component of the large ribosomal subunit. The ribosome is a large ribonucleoprotein complex responsible for the synthesis of proteins in the cell. The polypeptide is Large ribosomal subunit protein eL14 (RPL14) (Homo sapiens (Human)).